A 239-amino-acid chain; its full sequence is MKKTTLLHEGKAKKVFLTDEADLVIQEFKDDATAFNNKKKGTIAEKGVVNNAISCKLFTMLEGEGVRTHLVEKLSDRDMLCKKLDIIKVEVVVRNIAAGSLVKRYGFTEGSVLREPIVEFYLKNDDLDDPLMNESHAVALGVASLDELAVLGTRALRVNEVLKPFFAGVKLKLVDFKLEFGRHHGEILLGDEISPDTCRFWDLETNEKLDKDRFRLDLGGIEDAYSEVQKRVLGSGALS.

The protein belongs to the SAICAR synthetase family.

It carries out the reaction 5-amino-1-(5-phospho-D-ribosyl)imidazole-4-carboxylate + L-aspartate + ATP = (2S)-2-[5-amino-1-(5-phospho-beta-D-ribosyl)imidazole-4-carboxamido]succinate + ADP + phosphate + 2 H(+). It participates in purine metabolism; IMP biosynthesis via de novo pathway; 5-amino-1-(5-phospho-D-ribosyl)imidazole-4-carboxamide from 5-amino-1-(5-phospho-D-ribosyl)imidazole-4-carboxylate: step 1/2. The polypeptide is Phosphoribosylaminoimidazole-succinocarboxamide synthase (Chlorobium luteolum (strain DSM 273 / BCRC 81028 / 2530) (Pelodictyon luteolum)).